The sequence spans 743 residues: Apo-petrobactin exporter (743 aa).

12 helical membrane passes run 20–40 (WITL…LPQV), 199–219 (ADVK…ILLY), 223–243 (ILAI…SPTL), 258–278 (AISI…LFLI), 303–323 (GGAI…LLLA), 337–357 (VAVF…LLIF), 406–426 (WTII…VPRI), 561–581 (DEAV…LVYL), 584–604 (IVAM…ALGA), 613–633 (MGAP…LVAL), 672–692 (AGLI…QVLV), and 694–714 (FGIV…PLLV).

This sequence belongs to the resistance-nodulation-cell division (RND) (TC 2.A.6) family. MmpL subfamily.

The protein resides in the cell membrane. Exports the siderophore petrobactin. The protein is Apo-petrobactin exporter of Bacillus anthracis.